The following is a 274-amino-acid chain: Large ribosomal subunit protein uL2 (274 aa).

2 disordered regions span residues 40–59 (SGGR…GGHK) and 223–274 (VAMN…RRSR). 2 stretches are compositionally biased toward basic residues: residues 49–59 (VTRRHQGGGHK) and 256–274 (YRTR…RRSR).

Belongs to the universal ribosomal protein uL2 family. As to quaternary structure, part of the 50S ribosomal subunit. Forms a bridge to the 30S subunit in the 70S ribosome.

In terms of biological role, one of the primary rRNA binding proteins. Required for association of the 30S and 50S subunits to form the 70S ribosome, for tRNA binding and peptide bond formation. It has been suggested to have peptidyltransferase activity; this is somewhat controversial. Makes several contacts with the 16S rRNA in the 70S ribosome. This chain is Large ribosomal subunit protein uL2, found in Acidithiobacillus ferrooxidans (strain ATCC 23270 / DSM 14882 / CIP 104768 / NCIMB 8455) (Ferrobacillus ferrooxidans (strain ATCC 23270)).